Consider the following 95-residue polypeptide: MSRICELTGKGRQVGNNVSHANNRTKRTFLPNLQNVTLISDALGKGVTLRVSTHGLRSVEHVGGLDNWLLKTKNEKLSTRALKVKREVAKKLAAA.

This sequence belongs to the bacterial ribosomal protein bL28 family.

The chain is Large ribosomal subunit protein bL28 from Zymomonas mobilis subsp. mobilis (strain ATCC 31821 / ZM4 / CP4).